Reading from the N-terminus, the 583-residue chain is Radixin (583 aa).

Residues 5–295 (INVRVTTMDA…GNHELYMRRR (291 aa)) enclose the FERM domain. 60-63 (KLNK) is an a 1,2-diacyl-sn-glycero-3-phospho-(1D-myo-inositol) binding site. The residue at position 83 (lysine 83) is an N6-succinyllysine. Residue lysine 278 coordinates a 1,2-diacyl-sn-glycero-3-phospho-(1D-myo-inositol). Disordered regions lie at residues 309 to 336 (AREE…AEKE), 374 to 407 (ELDQ…AKQA), and 460 to 526 (KEEL…RVKK). A compositionally biased stretch (basic and acidic residues) spans 374-400 (ELDQERKRAKEEAERLEKERQAAEEAK). The segment covering 469 to 480 (APPPPPPPPVIP) has biased composition (pro residues). Basic and acidic residues-rich tracts occupy residues 483-492 (ENEHDEHDEN) and 506-525 (MNHR…ERVK). Threonine 564 carries the phosphothreonine; by ROCK2 modification.

Interacts with CPNE1 (via VWFA domain) and CPNE4 (via VWFA domain). Binds NHERF1. Interacts with NHERF1, NHERF2, LAYN, MME/NEP and ICAM2. Interacts (via FERM domain) with SPN/CD43 cytoplasmic tail. Interacts with CD44. Interacts with CLIC5; may work together in a complex which also includes EZR and MYO6 to stabilize linkages between the plasma membrane and subjacent actin cytoskeleton at the base of stereocilia. Phosphorylated by tyrosine-protein kinases. Phosphorylation by ROCK2 suppresses the head-to-tail association of the N-terminal and C-terminal halves resulting in an opened conformation which is capable of actin and membrane-binding.

It localises to the cell membrane. The protein resides in the cytoplasm. Its subcellular location is the cytoskeleton. It is found in the cleavage furrow. The protein localises to the cell projection. It localises to the microvillus. The protein resides in the stereocilium. Its activity is regulated as follows. A head-to-tail association, of the N-terminal and C-terminal halves results in a closed conformation (inactive form) which is incapable of actin or membrane-binding. Probably plays a crucial role in the binding of the barbed end of actin filaments to the plasma membrane. This chain is Radixin (RDX), found in Bos taurus (Bovine).